Consider the following 388-residue polypeptide: MSTDQEKIIKQVLDSIAEQQGDSRDDEVYVIEIMSLRFEKFDNRIKQKIERFTSLQMLTINDCLISDLTNFPHVPSLIRLDLVFNKITGDQLQYLRGSRHLQTLMLGANQIEEIEDLKRLGQMRELIQLDLLNNPVVNTNNYRNLVFNLFPSLVILDTLDKNGIDQEKAALDISASRVPDNLFDKSKPVQNVSKQVVKNAKATQNNLFSSTQKVAQVKQIPKIVPAKVSKPSQASVQDNKSNVVQAKVTAAVSVGRKAPASRNGGVPSKAGKGKMNAFSKQSTSQKSGLVFPCGRLRRYLKQACKQFRVSSSCNIYLAGVLEYLAAEVLETAGNIAKNNRLSRINPVHIREAFRNDAELNQFVNGTIIAEGGSTSTNFVLPIINKSKK.

3 LRR repeats span residues 54-75, 76-96, and 100-121; these read SLQM…PHVP, SLIR…QYLR, and HLQT…KRLG. An LRRCT domain is found at 134-172; that stretch reads NPVVNTNNYRNLVFNLFPSLVILDTLDKNGIDQEKAALD. The interval 256–279 is disordered; sequence RKAPASRNGGVPSKAGKGKMNAFS.

The protein belongs to the histone H2A family. As to quaternary structure, the nucleosome is a histone octamer containing two molecules each of H2A, H2B, H3 and H4 assembled in one H3-H4 heterotetramer and two H2A-H2B heterodimers. The octamer wraps approximately 147 bp of DNA.

The protein localises to the nucleus. The protein resides in the chromosome. Functionally, variant histone H2A which replaces conventional H2A in a subset of nucleosomes. Nucleosomes wrap and compact DNA into chromatin, limiting DNA accessibility to the cellular machineries which require DNA as a template. Histones thereby play a central role in transcription regulation, DNA repair, DNA replication and chromosomal stability. DNA accessibility is regulated via a complex set of post-translational modifications of histones, also called histone code, and nucleosome remodeling. The chain is Histone H2A.Y (HTAY) from Tetrahymena thermophila (strain SB210).